The sequence spans 450 residues: Phosphoglucosamine mutase (450 aa).

The active-site Phosphoserine intermediate is the S101. Mg(2+)-binding residues include S101, D240, D242, and D244. Position 101 is a phosphoserine (S101).

The protein belongs to the phosphohexose mutase family. Mg(2+) serves as cofactor. In terms of processing, activated by phosphorylation.

It catalyses the reaction alpha-D-glucosamine 1-phosphate = D-glucosamine 6-phosphate. Functionally, catalyzes the conversion of glucosamine-6-phosphate to glucosamine-1-phosphate. This chain is Phosphoglucosamine mutase, found in Streptococcus equi subsp. zooepidemicus (strain MGCS10565).